An 85-amino-acid chain; its full sequence is uncharacterized protein (85 aa).

This is an uncharacterized protein from Bacillus subtilis (strain 168).